A 264-amino-acid chain; its full sequence is Thymidylate synthase (264 aa).

Residue Arg21 coordinates dUMP. His51 is a (6R)-5,10-methylene-5,6,7,8-tetrahydrofolate binding site. Residue 126 to 127 (RR) participates in dUMP binding. Cys146 functions as the Nucleophile in the catalytic mechanism. DUMP contacts are provided by residues 166 to 169 (RSCD), Asn177, and 207 to 209 (HLY). Residue Asp169 participates in (6R)-5,10-methylene-5,6,7,8-tetrahydrofolate binding. Ala263 is a binding site for (6R)-5,10-methylene-5,6,7,8-tetrahydrofolate.

The protein belongs to the thymidylate synthase family. Bacterial-type ThyA subfamily. Homodimer.

It localises to the cytoplasm. It catalyses the reaction dUMP + (6R)-5,10-methylene-5,6,7,8-tetrahydrofolate = 7,8-dihydrofolate + dTMP. It participates in pyrimidine metabolism; dTTP biosynthesis. Catalyzes the reductive methylation of 2'-deoxyuridine-5'-monophosphate (dUMP) to 2'-deoxythymidine-5'-monophosphate (dTMP) while utilizing 5,10-methylenetetrahydrofolate (mTHF) as the methyl donor and reductant in the reaction, yielding dihydrofolate (DHF) as a by-product. This enzymatic reaction provides an intracellular de novo source of dTMP, an essential precursor for DNA biosynthesis. The chain is Thymidylate synthase from Shewanella sp. (strain ANA-3).